We begin with the raw amino-acid sequence, 191 residues long: Ribonuclease HII (191 aa).

Positions 16-191 constitute an RNase H type-2 domain; it reads INLIGIDEAG…KLHRKSFKLL (176 aa). D22, E23, and D110 together coordinate a divalent metal cation.

This sequence belongs to the RNase HII family. Mn(2+) is required as a cofactor. It depends on Mg(2+) as a cofactor.

The protein resides in the cytoplasm. The catalysed reaction is Endonucleolytic cleavage to 5'-phosphomonoester.. Its function is as follows. Endonuclease that specifically degrades the RNA of RNA-DNA hybrids. This chain is Ribonuclease HII (rnhB), found in Campylobacter jejuni subsp. jejuni serotype O:2 (strain ATCC 700819 / NCTC 11168).